The chain runs to 326 residues: Septum site-determining protein minD homolog, chloroplastic (326 aa).

Residues 1 to 62 (MASLRLFSTN…LAGETPRIVV (62 aa)) constitute a chloroplast transit peptide. Position 67–74 (67–74 (KGGVGKTT)) interacts with ATP.

The protein belongs to the ParA family. MinD subfamily. As to quaternary structure, homodimer. Interacts with MINE1. Binds to ARC3. Interacts with MCD1. Interacts with CDP1/PARC6.

It is found in the plastid. It localises to the chloroplast inner membrane. With respect to regulation, stimulated ATPase activity by MINE1. Together with ARC3 and MCD1, regulates FtsZ ring positioning in chloroplasts in an ARC6-dependent manner. Calcium-dependent ATPase required for the correct placement of the plastid division site. Inhibits FtsZ filament and ring formation in the plastid. Mediates inhibition of plastid division. In cooperation with MINE1, prevents FtsZ ring formation anywhere outside of the mid-plastids. In Arabidopsis thaliana (Mouse-ear cress), this protein is Septum site-determining protein minD homolog, chloroplastic.